The chain runs to 425 residues: Calreticulin-1 (425 aa).

Positions 1–22 are cleaved as a signal peptide; sequence MAKLNPKFISLILFALVVIVSA. An N-linked (GlcNAc...) asparagine glycan is attached at Asn59. Cys108 and Cys140 form a disulfide bridge. The an alpha-D-glucoside site is built by Tyr112, Lys114, Tyr131, and Asp138. N-linked (GlcNAc...) asparagine glycosylation is present at Asn154. Repeat copies occupy residues 194–205, 213–224, 230–241, 248–259, 263–273, 277–287, and 291–301. The segment at 194-259 is 4 X approximate repeats; that stretch reads KQTGSLYSDW…DAKKPEDWDD (66 aa). 2 stretches are compositionally biased toward basic and acidic residues: residues 213–235 and 241–255; these read DPSA…EDTK and DIPK…KKPE. Residues 213 to 281 form a disordered region; sequence DPSAKKPEDW…NPEYNGEWKP (69 aa). The 3 X approximate repeats stretch occupies residues 263–301; it reads GEWTAPTIPNPEYNGEWKPKKIKNPAYKGKWKAPMIDNP. Glu321 is a binding site for an alpha-D-glucoside. Positions 348–378 are enriched in basic and acidic residues; it reads EETWGKHKDAEKAAFDEAEKKREEEESKDAP. The segment at 348 to 425 is disordered; sequence EETWGKHKDA…EETDAAHDEL (78 aa). The segment covering 379-398 has biased composition (acidic residues); it reads AESDAEEEAEDDDNEGDDSD. Residues Ser381 and Ser397 each carry the phosphoserine modification. Asn399 is a glycosylation site (N-linked (GlcNAc...) asparagine). Residues 399 to 412 are compositionally biased toward basic and acidic residues; sequence NESKSEETKEAEET. The Prevents secretion from ER motif lies at 422–425; that stretch reads HDEL.

This sequence belongs to the calreticulin family.

The protein localises to the endoplasmic reticulum lumen. Functionally, molecular calcium-binding chaperone promoting folding, oligomeric assembly and quality control in the ER via the calreticulin/calnexin cycle. This lectin may interact transiently with almost all of the monoglucosylated glycoproteins that are synthesized in the ER. The protein is Calreticulin-1 (CRT1) of Arabidopsis thaliana (Mouse-ear cress).